We begin with the raw amino-acid sequence, 351 residues long: D-alanine--D-alanine ligase (351 aa).

An ATP-grasp domain is found at 146–340 (KEIMLYNNIK…YEDLCESIVL (195 aa)). 173–226 (AFDYPMVVKPNSGGSSIGTRIVHDEAELAESLKDAYRFDDEIIVEEFITGREFS) serves as a coordination point for ATP. Mg(2+) is bound by residues Asp295, Glu307, and Asn309.

Belongs to the D-alanine--D-alanine ligase family. Mg(2+) serves as cofactor. It depends on Mn(2+) as a cofactor.

The protein resides in the cytoplasm. The enzyme catalyses 2 D-alanine + ATP = D-alanyl-D-alanine + ADP + phosphate + H(+). The protein operates within cell wall biogenesis; peptidoglycan biosynthesis. Functionally, cell wall formation. This is D-alanine--D-alanine ligase from Pediococcus pentosaceus (strain ATCC 25745 / CCUG 21536 / LMG 10740 / 183-1w).